A 269-amino-acid polypeptide reads, in one-letter code: Ribosomal RNA small subunit methyltransferase A (269 aa).

His11, Leu13, Gly38, Glu59, Asp84, and Asn105 together coordinate S-adenosyl-L-methionine.

This sequence belongs to the class I-like SAM-binding methyltransferase superfamily. rRNA adenine N(6)-methyltransferase family. RsmA subfamily.

Its subcellular location is the cytoplasm. The enzyme catalyses adenosine(1518)/adenosine(1519) in 16S rRNA + 4 S-adenosyl-L-methionine = N(6)-dimethyladenosine(1518)/N(6)-dimethyladenosine(1519) in 16S rRNA + 4 S-adenosyl-L-homocysteine + 4 H(+). In terms of biological role, specifically dimethylates two adjacent adenosines (A1518 and A1519) in the loop of a conserved hairpin near the 3'-end of 16S rRNA in the 30S particle. May play a critical role in biogenesis of 30S subunits. The protein is Ribosomal RNA small subunit methyltransferase A of Acaryochloris marina (strain MBIC 11017).